A 523-amino-acid chain; its full sequence is AarF domain-containing protein kinase 1 (523 aa).

The Protein kinase domain maps to 148–484 (EFEEKPLGAA…SLWSYIHISL (337 aa)). ATP contacts are provided by residues 154 to 162 (LGAASLAQV) and lysine 176. Aspartate 308 functions as the Proton acceptor in the catalytic mechanism.

The protein belongs to the protein kinase superfamily. ADCK protein kinase family.

The protein resides in the mitochondrion. Its function is as follows. Appears to be essential for maintaining mitochondrial cristae formation and mitochondrial function by acting via YME1L1 in a kinase-independent manner to regulate essential mitochondrial structural proteins OPA1 and IMMT. The action of this enzyme is not yet clear. It is not known if it has protein kinase activity and what type of substrate it would phosphorylate (Ser, Thr or Tyr). The polypeptide is AarF domain-containing protein kinase 1 (adck1) (Xenopus tropicalis (Western clawed frog)).